The following is a 161-amino-acid chain: Nucleotide-binding protein Daci_4781 (161 aa).

The protein belongs to the YajQ family.

Its function is as follows. Nucleotide-binding protein. The protein is Nucleotide-binding protein Daci_4781 of Delftia acidovorans (strain DSM 14801 / SPH-1).